Reading from the N-terminus, the 357-residue chain is 4-hydroxyphenylpyruvate dioxygenase (357 aa).

2 VOC domains span residues 12 to 129 (GFEF…LIDR) and 158 to 313 (IIDH…IFSE). Fe cation is bound by residues histidine 161, histidine 240, and glutamate 322.

It belongs to the 4HPPD family. As to quaternary structure, homotetramer. Fe cation is required as a cofactor.

It catalyses the reaction 3-(4-hydroxyphenyl)pyruvate + O2 = homogentisate + CO2. It participates in amino-acid degradation; L-phenylalanine degradation; acetoacetate and fumarate from L-phenylalanine: step 3/6. This chain is 4-hydroxyphenylpyruvate dioxygenase (hpd), found in Pseudomonas sp. (strain P.J. 874).